The primary structure comprises 244 residues: Tetraspanin-1 (244 aa).

4 consecutive transmembrane segments (helical) span residues 11–31 (VLFF…AVGF), 67–87 (LIVV…TAVL), 104–124 (YLVL…AVLV), and 198–218 (ILLV…PILI).

This sequence belongs to the tetraspanin (TM4SF) family.

The protein resides in the membrane. The chain is Tetraspanin-1 (tsp-1) from Caenorhabditis elegans.